The following is a 212-amino-acid chain: HTH-type transcriptional repressor KstR (212 aa).

Over residues Met-1 to Thr-11 the composition is skewed to low complexity. The segment at Met-1 to Lys-28 is disordered. The HTH tetR-type domain maps to Lys-28–Ile-88. The segment at residues Gln-51–Phe-70 is a DNA-binding region (H-T-H motif).

As to quaternary structure, homodimer.

Functionally, controls the expression of genes used for utilizing diverse lipids as energy sources. The sequence is that of HTH-type transcriptional repressor KstR (kstR) from Rhodococcus jostii (strain RHA1).